Reading from the N-terminus, the 750-residue chain is MLGRLKDQLNMTLAQGQEEAKNRRRQFQEEDQLRRNNKSSNKLSQNEEDAKNMDSVVQKLNELQNNVVAFQKLLQEKTPLSSIQDLEGFREFMENLEHRYEMTVSEVRRLSHEVNDLQTDRENLKHQFEDQIEKLNSEISNQNSLILQKKDELEKSIQRCSELEEKINSLESAQSIEQEVISSLKDDKTVETKNDVPEVSRPSTDTIGVSSALSKKKKKRNRKNQKKKSTKQNIEATTENDALSESISTPDIQKVAQSEDVDAEQDTVADSKEEERRDIANDDLIVNANAKEPMHHFSFTDLDTLLNWPKYVFHHHKIHLADTIPLVFLDLKPKEYTVDLETPKLVEELTKQLHVAESTLKENSEKFKQNSESLKSRVDNLNDYITKLQNEIDECRRNLLWAESSCETIREENQKNIKKLNDAESLKSRLLQSRTQMQTELDSYITSNSQLKDEITSLKQTVSESEAERKRLFSSAQEKQLQMKETVNKLTSLQEQNNEFDRQLKEQEEDLQNKEEELTELRKLLREQTQDSQKLRLLVEQLELERQDLKQAGENHYSNLSSDYETQIKSLESSLTNSQAECVSFQEKINELNSQIDELKLKLNEANKKYQELAISFENSNVKTQSVEPDNGLSLEALKNENQTLLKNLEDSTARYEHLQKSFKNVFNQLRKQQPSNHGRNSSVSRSSSSVEVNSKHPGSDDMLIDKEYTRNILFQFLEQRDRRPEIVNLLSILLDLSEEQKQKLLSVKY.

Disordered stretches follow at residues 14 to 53 (AQGQ…AKNM) and 188 to 280 (KTVE…RDIA). 2 stretches are compositionally biased toward basic and acidic residues: residues 18-34 (EEAK…DQLR) and 188-198 (KTVETKNDVPE). Positions 28 to 182 (QEEDQLRRNN…AQSIEQEVIS (155 aa)) form a coiled coil. Residues 201–213 (RPSTDTIGVSSAL) show a composition bias toward polar residues. Positions 213–243 (LSKKKKKRNRKNQKKKSTKQNIEATTENDAL) form a coiled coil. Over residues 214-230 (SKKKKKRNRKNQKKKST) the composition is skewed to basic residues. The span at 233 to 251 (NIEATTENDALSESISTPD) shows a compositional bias: polar residues. A compositionally biased stretch (basic and acidic residues) spans 269–280 (ADSKEEERRDIA). Residues 344–665 (KLVEELTKQL…YEHLQKSFKN (322 aa)) are a coiled coil. The segment at 672 to 703 (KQQPSNHGRNSSVSRSSSSVEVNSKHPGSDDM) is disordered. The segment covering 676 to 693 (SNHGRNSSVSRSSSSVEV) has biased composition (low complexity). The segment covering 694 to 703 (NSKHPGSDDM) has biased composition (basic and acidic residues). The 49-residue stretch at 700–748 (SDDMLIDKEYTRNILFQFLEQRDRRPEIVNLLSILLDLSEEQKQKLLSV) folds into the GRIP domain.

It localises to the cytoplasm. This is GRIP and coiled-coil domain-containing protein C27D7.02c from Schizosaccharomyces pombe (strain 972 / ATCC 24843) (Fission yeast).